The sequence spans 186 residues: FMN-dependent NADH:quinone oxidoreductase 1 (186 aa).

Residues 15–17 and 81–84 contribute to the FMN site; these read SVS and MYNF.

This sequence belongs to the azoreductase type 1 family. As to quaternary structure, homodimer. Requires FMN as cofactor.

The enzyme catalyses 2 a quinone + NADH + H(+) = 2 a 1,4-benzosemiquinone + NAD(+). It carries out the reaction N,N-dimethyl-1,4-phenylenediamine + anthranilate + 2 NAD(+) = 2-(4-dimethylaminophenyl)diazenylbenzoate + 2 NADH + 2 H(+). In terms of biological role, quinone reductase that provides resistance to thiol-specific stress caused by electrophilic quinones. Also exhibits azoreductase activity. Catalyzes the reductive cleavage of the azo bond in aromatic azo compounds to the corresponding amines. This chain is FMN-dependent NADH:quinone oxidoreductase 1, found in Idiomarina loihiensis (strain ATCC BAA-735 / DSM 15497 / L2-TR).